A 131-amino-acid chain; its full sequence is Fumarate reductase subunit C (131 aa).

The next 3 membrane-spanning stretches (helical) occupy residues 30 to 50, 63 to 83, and 109 to 129; these read EGTAVPAVWFSIELIFGLFAL, FLQNPVIVIINLITLAAALLH, and IIKSLWAVTVVATIVILFVAL.

The protein belongs to the FrdC family. As to quaternary structure, part of an enzyme complex containing four subunits: a flavoprotein (FrdA), an iron-sulfur protein (FrdB), and two hydrophobic anchor proteins (FrdC and FrdD).

The protein resides in the cell inner membrane. Functionally, two distinct, membrane-bound, FAD-containing enzymes are responsible for the catalysis of fumarate and succinate interconversion; fumarate reductase is used in anaerobic growth, and succinate dehydrogenase is used in aerobic growth. Anchors the catalytic components of the fumarate reductase complex to the cell inner membrane, binds quinones. The sequence is that of Fumarate reductase subunit C from Shigella dysenteriae serotype 1 (strain Sd197).